We begin with the raw amino-acid sequence, 227 residues long: Cytidylate kinase (227 aa).

12 to 20 (GPSGAGKGT) is a binding site for ATP.

The protein belongs to the cytidylate kinase family. Type 1 subfamily.

Its subcellular location is the cytoplasm. It carries out the reaction CMP + ATP = CDP + ADP. It catalyses the reaction dCMP + ATP = dCDP + ADP. This Enterobacter sp. (strain 638) protein is Cytidylate kinase.